We begin with the raw amino-acid sequence, 146 residues long: Lysozyme C-2 (146 aa).

A signal peptide spans 1-18 (MKTLLVLALLLLSVSVQA). In terms of domain architecture, C-type lysozyme spans 19-146 (KVYDRCEFAR…VSQYIRGCKL (128 aa)). Intrachain disulfides connect Cys-24–Cys-144, Cys-48–Cys-132, Cys-81–Cys-97, and Cys-93–Cys-111. Catalysis depends on residues Glu-53 and Asp-69.

The protein belongs to the glycosyl hydrolase 22 family. As to quaternary structure, monomer.

It localises to the secreted. The catalysed reaction is Hydrolysis of (1-&gt;4)-beta-linkages between N-acetylmuramic acid and N-acetyl-D-glucosamine residues in a peptidoglycan and between N-acetyl-D-glucosamine residues in chitodextrins.. Lysozymes have primarily a bacteriolytic function; those in tissues and body fluids are associated with the monocyte-macrophage system and enhance the activity of immunoagents. This chain is Lysozyme C-2, found in Sus scrofa (Pig).